Here is a 494-residue protein sequence, read N- to C-terminus: Gabija protein GajB (494 aa).

Residues 1-229 (MSREQIIKDG…YHLTSNFRCC (229 aa)) form the UvrD-like helicase ATP-binding domain. 17–24 (AGAGSGKT) lines the ATP pocket.

It belongs to the helicase family. Homodimer. Interacts with GajA; 2 GajB dimers dock at opposite sides of the GajA complex to form a 4:4 GajA-GajB assembly (GajAB). GajAB interacts with Bacillus phage Phi3T Gad1 protein; this interaction forms a 4:4:8 GajAB-Gad1 complex and leads to GajAB inhibition.

Its function is as follows. Component of antiviral defense system Gabija type I, composed of GajA and GajB. Expression of Gabija type I in B.subtilis (strain BEST7003) confers resistance to phages phi105, phi29, rho14, SpBeta and SBSphiC. Expression of Gabija type I in E.coli B (strain ATCC 11303) confers resistance to phage T7. May be a helicase or contribute to GajA activation. This chain is Gabija protein GajB, found in Bacillus cereus (strain VD045).